A 414-amino-acid polypeptide reads, in one-letter code: 2,3-diketo-5-methylthiopentyl-1-phosphate enolase (414 aa).

The active-site Proton acceptor is the lysine 99. Substrate contacts are provided by residues lysine 148, 174–177, histidine 265, glycine 338, and 360–361; these read KDDE and GG. Mg(2+)-binding residues include lysine 174, aspartate 176, and glutamate 177. Lysine 174 carries the post-translational modification N6-carboxylysine.

Belongs to the RuBisCO large chain family. Type IV subfamily. In terms of assembly, homodimer. The cofactor is Mg(2+).

It carries out the reaction 5-methylsulfanyl-2,3-dioxopentyl phosphate = 2-hydroxy-5-methylsulfanyl-3-oxopent-1-enyl phosphate. The protein operates within amino-acid biosynthesis; L-methionine biosynthesis via salvage pathway; L-methionine from S-methyl-5-thio-alpha-D-ribose 1-phosphate: step 3/6. Catalyzes the enolization of 2,3-diketo-5-methylthiopentyl-1-phosphate (DK-MTP-1-P) into 2-hydroxy-3-keto-5-methylthiopentenyl-1-phosphate (HK-MTPenyl-1-P). The chain is 2,3-diketo-5-methylthiopentyl-1-phosphate enolase from Bacillus cereus (strain ZK / E33L).